Reading from the N-terminus, the 85-residue chain is Putative septation protein SpoVG (85 aa).

Belongs to the SpoVG family.

Functionally, could be involved in septation. This Archaeoglobus fulgidus (strain ATCC 49558 / DSM 4304 / JCM 9628 / NBRC 100126 / VC-16) protein is Putative septation protein SpoVG.